The following is a 279-amino-acid chain: 2-dehydro-3-deoxyphosphooctonate aldolase (279 aa).

It belongs to the KdsA family.

The protein resides in the cytoplasm. It carries out the reaction D-arabinose 5-phosphate + phosphoenolpyruvate + H2O = 3-deoxy-alpha-D-manno-2-octulosonate-8-phosphate + phosphate. Its pathway is carbohydrate biosynthesis; 3-deoxy-D-manno-octulosonate biosynthesis; 3-deoxy-D-manno-octulosonate from D-ribulose 5-phosphate: step 2/3. It participates in bacterial outer membrane biogenesis; lipopolysaccharide biosynthesis. The chain is 2-dehydro-3-deoxyphosphooctonate aldolase from Aromatoleum aromaticum (strain DSM 19018 / LMG 30748 / EbN1) (Azoarcus sp. (strain EbN1)).